We begin with the raw amino-acid sequence, 1195 residues long: MSARYAEIGVTTNFSFLEGGSHPQDYVHEASRLGLDAIGIADRNTLAGVVRAFSEFDNEELIHKPKLLIGTRLCFADGTPDLLAYPTDRAAYGRLCRLLSAGKLRAGKGECHLTFADLEAFIHERSPSIHELATVIHPPSASINQPSASIHQFPTPSWPGLTRPSTPTSKVVLVSVDARVKPGHDGGKRVADNSQILLVVMPSYRFQTKTIAIALERLTALNADAVWLGLTPYYRGDDKRRLARLRRIAAVARVPCIATNDVLYHHPRRRALQDVLTCVREKTSIDKAGRRLEGNAERHLKPAAEMARLFRHDPEAIAETLRFADRISFTLDELKYHYPDEPVPPGKTAQAHLQDLTEQGIKQYFPNGISDRLRATIAKELAIIERRGYAHYFLTVHDIVRYARSQDILCQGRGSAANSAVCYVLGITCVDPTEIDLLFERFVSEERDEPPDIDVDFEHSRREEVMQYIYRRYGRHRAAIVATVIHYRPRSAIRDVGKALGLSEDVTAALADTVWGSWGKGLNEMQVRQAGLDPHNPMIGRAVELATELIGFPRHLSQHVGGYVLTQDRLDSYVPIGNAAMADRTFIEWDKDDIDAVKMMKVDVLALGMLTCIRKGFHLIAQHKGVRFQLSDIKSEDDNAVYKMLQRGESIGVFQVESRAQMNMLPRLKPRCFYDLVIEVAIVRPGPIQGDMVHPYLRRRNGQEPVVYPSPSGEAGDKNELRQILGKTLGVPLFQEQAMRIAIEAAHFTPDEANQLRRAMATFRNVGTIGKFEAKMIGNLVKRGYDATFAKNCFEQIKGFGSYGFPESHAASFAKLVYVSAWMKCEHPDAFCCALLNSQPMGFYAPAQIVGDARSNGVEVRPVDVSFSEGQCTLEERCGRHHAVRLGFRMIDGFRWADPDEERVQLEAGEPPSDDWAARIVAARARGAFTSLEQFARITALPKRALILLADADAFRSLGLDRRAALWAVRRLPDDVPLPLFEAASAREQEDERAAPLPAMPMAEHVVADYQTVRLSLKGHPMEFLRALFAAERVVTCREVSRSEQRASGCWLRCAGVVLVRQRPGSANGVIFMTIEDETGIANIVVWPAVMEKYRKEVMGARLVLVEGKVQASAEGVVHLVAERLIDRSAEMGRLAEGLVRPALPDGADLYEPLTSEKYNYEALNGDRRDTPDAPAQRHRHPRDVRILPPSRDFH.

A disordered region spans residues 1163-1195 (ALNGDRRDTPDAPAQRHRHPRDVRILPPSRDFH).

The protein belongs to the DNA polymerase type-C family. DnaE2 subfamily.

It localises to the cytoplasm. The enzyme catalyses DNA(n) + a 2'-deoxyribonucleoside 5'-triphosphate = DNA(n+1) + diphosphate. In terms of biological role, DNA polymerase involved in damage-induced mutagenesis and translesion synthesis (TLS). It is not the major replicative DNA polymerase. The chain is Error-prone DNA polymerase from Rhodopseudomonas palustris (strain ATCC BAA-98 / CGA009).